A 2385-amino-acid polypeptide reads, in one-letter code: Neuron navigator 3 (2385 aa).

The tract at residues 17 to 38 is disordered; the sequence is SKPVHTALPIPNLGTTGSQHCS. The span at 29–38 shows a compositional bias: polar residues; that stretch reads LGTTGSQHCS. In terms of domain architecture, Calponin-homology (CH) spans 77 to 184; sequence KEDSKIYTDW…LFFSLSRYKQ (108 aa). The tract at residues 203-625 is disordered; that stretch reads VTHASPPSEA…LPQQQQHSHP (423 aa). Polar residues-rich tracts occupy residues 210 to 243, 258 to 279, and 297 to 316; these read SEAS…TSQK, GSSS…FNSI, and KGPQ…STAG. Positions 318-329 are enriched in low complexity; the sequence is PPASAIPSPSAS. Residues 335-352 are compositionally biased toward polar residues; sequence KSMNVKHSATSTMLTVKQ. Composition is skewed to low complexity over residues 353–363 and 427–439; these read SSTATSPTPSS and NSGL…TNSS. A compositionally biased stretch (basic and acidic residues) spans 465-491; the sequence is PKEKEEKNRDKNKVCTEKPVKEEKDQV. A compositionally biased stretch (low complexity) spans 521–535; sequence IPSSSGIPKPGSKVP. Composition is skewed to polar residues over residues 537–548, 557–567, and 591–625; these read VKQTISPGSTAS, TKGSPSQSLSK, and ASPS…HSHP. Residues 679-707 adopt a coiled-coil conformation; that stretch reads ETRRMRTVKNIADLRQNLEETMSSLRGTQ. Disordered stretches follow at residues 877-1312, 1351-1370, 1410-1468, 1650-1778, 1850-1881, and 2360-2385; these read ADSW…SPLF, SSSS…TSLH, LSES…SAMS, GALN…KRQN, DRLK…SRQS, and SSTQ…ESTL. Low complexity predominate over residues 882 to 895; that stretch reads DSSSVSSGLSDTLD. Residues 896 to 925 are compositionally biased toward polar residues; it reads NISTDDLNTTSSVSSYSNITVPSRKNTQLR. Over residues 942–959 the composition is skewed to basic and acidic residues; that stretch reads EELKKPEEDFDSHGDAGG. Polar residues predominate over residues 979-988; that stretch reads ASLSVSQTGS. Residues 1014 to 1026 are compositionally biased toward basic and acidic residues; the sequence is GKTDDAKASEKGK. 2 stretches are compositionally biased toward low complexity: residues 1074 to 1092 and 1157 to 1170; these read GSSA…GSAT and SSTS…SSKS. The segment covering 1187–1196 has biased composition (polar residues); sequence GRSSPVTVNQ. Composition is skewed to low complexity over residues 1206–1226 and 1253–1263; these read VSDS…TSAS and GAKAGGKSASA. The segment covering 1264-1289 has biased composition (polar residues); it reads PNTEGVKSSSVMPSPSTTLARQGSLE. The segment covering 1296–1305 has biased composition (gly residues); sequence GSMGSAGGLS. A compositionally biased stretch (basic and acidic residues) spans 1436–1445; that stretch reads NQEEGKEWLR. The span at 1446–1462 shows a compositional bias: polar residues; that stretch reads SHSTGGLQDTGNQSPLV. Phosphoserine occurs at positions 1459 and 1463. Residues 1562–1653 adopt a coiled-coil conformation; it reads AEEKAHSEQI…AQAAIQGALN (92 aa). A compositionally biased stretch (low complexity) spans 1672–1689; that stretch reads SVSSINSATSHSSIGSGN. A compositionally biased stretch (polar residues) spans 1701–1714; it reads WVNSRGSELRSSFK. The stretch at 1794–1861 forms a coiled coil; that stretch reads EAEAEIILQL…LKAETGNTAK (68 aa). The span at 1867-1881 shows a compositional bias: low complexity; the sequence is SESSSSTSSSSSRQS.

This sequence belongs to the Nav/unc-53 family. As to expression, highly expressed in brain. Expressed at low levels in heart and placenta. Present in activated T-cells but not in resting T-cells (at protein level). Down-regulated in primary neuroblastoma.

The protein localises to the nucleus outer membrane. Plays a role in cell migration. May be involved in neuron regeneration. May regulate IL2 production by T-cells. This is Neuron navigator 3 (NAV3) from Homo sapiens (Human).